We begin with the raw amino-acid sequence, 339 residues long: MSQLTAEELDSQKCASEGLTSVLTSITMKFNFLFITTVILLSYCFTWLAIRALWKNNIFSNSTRLILIACLLNSVVHQTTMLESRMRQTYRSFVFASEPCNLLYRSSDCVFELHSYYLTGYFSTYSVCSLAFDRLVSHYKSKFYHTHQYFIAVSLLVLQLLLTLVSFYIAYYGVHLAGYVPVCIHYPRLAVHYSTVNTVRTVVMVCCLVVTGFIYYLSVKSEKQIQKSSYSPGKRYTAYENVTTSQSVCILIVLKLFCNMLSSIGINLLLLMGEVVSEGTFVLVALFLPGVTYANLCLPLVIYFKTKLIIRNRKFRIAVMTSMYGDAGEHIDRLKKSWE.

5 helical membrane-spanning segments follow: residues 30–50 (FNFL…WLAI), 150–170 (FIAV…FYIA), 199–219 (VRTV…YLSV), 250–270 (ILIV…NLLL), and 282–302 (VLVA…PLVI).

It belongs to the nematode receptor-like protein sra family.

Its subcellular location is the membrane. This chain is Serpentine receptor class alpha-21 (sra-21), found in Caenorhabditis elegans.